Here is a 108-residue protein sequence, read N- to C-terminus: uncharacterized protein (108 aa).

Residues 1–15 are compositionally biased toward polar residues; sequence MSDSNSRLVYSTQTG. Residues 1 to 29 form a disordered region; it reads MSDSNSRLVYSTQTGRIEEPKTAPVRPKG. Residues 16–29 are compositionally biased toward basic and acidic residues; it reads RIEEPKTAPVRPKG.

Belongs to the SUI1 family.

This is an uncharacterized protein from Salmonella typhi.